A 298-amino-acid polypeptide reads, in one-letter code: Ethanolamine ammonia-lyase small subunit (298 aa).

Positions 17 to 37 are disordered; the sequence is MGQDVPQPVAPSKQEGAKPQC. The adenosylcob(III)alamin site is built by Val-210, Glu-231, and Cys-261.

Belongs to the EutC family. As to quaternary structure, the basic unit is a heterodimer which dimerizes to form tetramers. The heterotetramers trimerize; 6 large subunits form a core ring with 6 small subunits projecting outwards. Adenosylcob(III)alamin serves as cofactor.

It localises to the bacterial microcompartment. It carries out the reaction ethanolamine = acetaldehyde + NH4(+). Its pathway is amine and polyamine degradation; ethanolamine degradation. Its function is as follows. Catalyzes the deamination of various vicinal amino-alcohols to oxo compounds. Allows this organism to utilize ethanolamine as the sole source of nitrogen and carbon in the presence of external vitamin B12. The polypeptide is Ethanolamine ammonia-lyase small subunit (Salmonella paratyphi A (strain ATCC 9150 / SARB42)).